Here is a 160-residue protein sequence, read N- to C-terminus: MTRGLVFFVSTACGILADQLSKFIITANLATGTSIPESGFFQIVHVHNTGAAFSIFQGHIEWLIAASVLGVILAMTAFFIRKKLPFLDTRPGLIALGVILAGTVGNLIDRVRLGYVTDFIRVGDFPTFNIADSCLTVGVIGLLLLYIVSSHVSGDTSENV.

3 helical membrane-spanning segments follow: residues 5 to 25 (LVFF…KFII), 60 to 80 (IEWL…AFFI), and 84 to 104 (LPFL…AGTV). Active-site residues include Asp118 and Asp132. Residues 128-148 (FNIADSCLTVGVIGLLLLYIV) form a helical membrane-spanning segment.

The protein belongs to the peptidase A8 family.

Its subcellular location is the cell membrane. The catalysed reaction is Release of signal peptides from bacterial membrane prolipoproteins. Hydrolyzes -Xaa-Yaa-Zaa-|-(S,diacylglyceryl)Cys-, in which Xaa is hydrophobic (preferably Leu), and Yaa (Ala or Ser) and Zaa (Gly or Ala) have small, neutral side chains.. It participates in protein modification; lipoprotein biosynthesis (signal peptide cleavage). Functionally, this protein specifically catalyzes the removal of signal peptides from prolipoproteins. The protein is Lipoprotein signal peptidase of Dehalococcoides mccartyi (strain ATCC BAA-2100 / JCM 16839 / KCTC 5957 / BAV1).